The following is a 418-amino-acid chain: Tyrosine--tRNA ligase 1 (418 aa).

Position 34 (Tyr34) interacts with L-tyrosine. Positions 39 to 48 (PTGDSMHIGH) match the 'HIGH' region motif. Residues Tyr166 and Gln170 each contribute to the L-tyrosine site. The 'KMSKS' region signature appears at 228–232 (KFGKT). Lys231 is a binding site for ATP. The S4 RNA-binding domain occupies 350-416 (KNIVDWLVDT…GKKNYFLAKV (67 aa)).

Belongs to the class-I aminoacyl-tRNA synthetase family. TyrS type 1 subfamily. In terms of assembly, homodimer.

Its subcellular location is the cytoplasm. It catalyses the reaction tRNA(Tyr) + L-tyrosine + ATP = L-tyrosyl-tRNA(Tyr) + AMP + diphosphate + H(+). Catalyzes the attachment of tyrosine to tRNA(Tyr) in a two-step reaction: tyrosine is first activated by ATP to form Tyr-AMP and then transferred to the acceptor end of tRNA(Tyr). The sequence is that of Tyrosine--tRNA ligase 1 from Enterococcus faecalis (strain ATCC 700802 / V583).